The primary structure comprises 364 residues: Aminomethyltransferase (364 aa).

It belongs to the GcvT family. In terms of assembly, the glycine cleavage system is composed of four proteins: P, T, L and H.

It catalyses the reaction N(6)-[(R)-S(8)-aminomethyldihydrolipoyl]-L-lysyl-[protein] + (6S)-5,6,7,8-tetrahydrofolate = N(6)-[(R)-dihydrolipoyl]-L-lysyl-[protein] + (6R)-5,10-methylene-5,6,7,8-tetrahydrofolate + NH4(+). Its function is as follows. The glycine cleavage system catalyzes the degradation of glycine. The chain is Aminomethyltransferase from Escherichia coli O127:H6 (strain E2348/69 / EPEC).